Here is a 314-residue protein sequence, read N- to C-terminus: Methionyl-tRNA formyltransferase (314 aa).

Residue 113–116 (SLLP) participates in (6S)-5,6,7,8-tetrahydrofolate binding.

This sequence belongs to the Fmt family.

The catalysed reaction is L-methionyl-tRNA(fMet) + (6R)-10-formyltetrahydrofolate = N-formyl-L-methionyl-tRNA(fMet) + (6S)-5,6,7,8-tetrahydrofolate + H(+). In terms of biological role, attaches a formyl group to the free amino group of methionyl-tRNA(fMet). The formyl group appears to play a dual role in the initiator identity of N-formylmethionyl-tRNA by promoting its recognition by IF2 and preventing the misappropriation of this tRNA by the elongation apparatus. This is Methionyl-tRNA formyltransferase from Serratia proteamaculans (strain 568).